The sequence spans 560 residues: uncharacterized protein (560 aa).

The first 29 residues, 1-29 (MKSALKKSVVSTSISLILASGMAAFAAHA), serve as a signal peptide directing secretion. Positions 66, 67, and 132 each coordinate Ca(2+). Residue Ser132 is the Nucleophile of the active site. Ser132 carries the 3-oxoalanine (Ser) modification. His185 is an active-site residue. Ca(2+)-binding residues include Asp345 and Asn346.

Belongs to the sulfatase family. It depends on Ca(2+) as a cofactor. The conversion to 3-oxoalanine (also known as C-formylglycine, FGly), of a serine or cysteine residue in prokaryotes and of a cysteine residue in eukaryotes, is critical for catalytic activity.

This is an uncharacterized protein from Escherichia coli (strain K12).